Consider the following 157-residue polypeptide: 2-C-methyl-D-erythritol 2,4-cyclodiphosphate synthase (157 aa).

Residues aspartate 8 and histidine 10 each coordinate a divalent metal cation. 4-CDP-2-C-methyl-D-erythritol 2-phosphate is bound by residues 8–10 (DVH) and 34–35 (HS). Histidine 42 is an a divalent metal cation binding site. Residues 56–58 (DIG), 61–65 (FPDTD), 100–106 (AQAPKML), 132–135 (TTTE), phenylalanine 139, and arginine 142 each bind 4-CDP-2-C-methyl-D-erythritol 2-phosphate.

The protein belongs to the IspF family. In terms of assembly, homotrimer. Requires a divalent metal cation as cofactor.

The enzyme catalyses 4-CDP-2-C-methyl-D-erythritol 2-phosphate = 2-C-methyl-D-erythritol 2,4-cyclic diphosphate + CMP. Its pathway is isoprenoid biosynthesis; isopentenyl diphosphate biosynthesis via DXP pathway; isopentenyl diphosphate from 1-deoxy-D-xylulose 5-phosphate: step 4/6. Involved in the biosynthesis of isopentenyl diphosphate (IPP) and dimethylallyl diphosphate (DMAPP), two major building blocks of isoprenoid compounds. Catalyzes the conversion of 4-diphosphocytidyl-2-C-methyl-D-erythritol 2-phosphate (CDP-ME2P) to 2-C-methyl-D-erythritol 2,4-cyclodiphosphate (ME-CPP) with a corresponding release of cytidine 5-monophosphate (CMP). The protein is 2-C-methyl-D-erythritol 2,4-cyclodiphosphate synthase of Erwinia tasmaniensis (strain DSM 17950 / CFBP 7177 / CIP 109463 / NCPPB 4357 / Et1/99).